The chain runs to 131 residues: MTKKTIYFICTGNSCRSQMAEGWAKQILAEDWNVYSAGIETHGVNPKAIEAMKEVGIDISNHTSDLIDNNIIKNSNLVVTLCSDADVNCPSLPANVKKEHWGFDNPAGKPWSEFQRVRDEIKIAIENFKSR.

Residues C10, C82, and C89 each act as nucleophile in the active site. 2 disulfide bridges follow: C10–C82 and C82–C89.

The protein belongs to the low molecular weight phosphotyrosine protein phosphatase family. Thioredoxin-coupled ArsC subfamily.

It localises to the cytoplasm. It carries out the reaction arsenate + [thioredoxin]-dithiol + H(+) = arsenite + [thioredoxin]-disulfide + H2O. Catalyzes the reduction of arsenate [As(V)] to arsenite [As(III)]. The polypeptide is Arsenate reductase (Staphylococcus aureus (strain bovine RF122 / ET3-1)).